The primary structure comprises 689 residues: Solute carrier family 22 member 23 (689 aa).

Disordered stretches follow at residues 1 to 55 (MAID…PLPA) and 162 to 188 (TASW…GKGN). An N-linked (GlcNAc...) asparagine glycan is attached at Asn24. Polar residues predominate over residues 165–177 (WGTTSNRSNSSDT). The next 2 membrane-spanning stretches (helical) occupy residues 229–249 (FSLL…ADWV) and 253–273 (PVLL…ALSV). The N-linked (GlcNAc...) asparagine glycan is linked to Asn274. 8 helical membrane-spanning segments follow: residues 283-303 (FFEG…RIEL), 310-330 (FIIT…MPGL), 339-359 (VLQA…SIFP), 462-482 (ADYY…CLVV), 489-509 (GGLL…LGLL), 541-561 (IAFS…SVFF), 572-592 (CGGL…APII), and 601-621 (FLHH…ILLL).

The protein belongs to the major facilitator (TC 2.A.1) superfamily. Organic cation transporter (TC 2.A.1.19) family. In terms of tissue distribution, expressed in many tissues, including brain, spinal cord, kidney, liver, eye, adipose tissue, lung, epididymis, adrenal gland, pineal gland, skeletal muscle, heart, spleen, thymus, ovary, uterus, testis and epididymis.

The protein resides in the membrane. This is Solute carrier family 22 member 23 (Slc22a23) from Rattus norvegicus (Rat).